Here is a 260-residue protein sequence, read N- to C-terminus: Tryptophan synthase alpha chain (260 aa).

Active-site proton acceptor residues include glutamate 52 and aspartate 63.

Belongs to the TrpA family. In terms of assembly, tetramer of two alpha and two beta chains.

The enzyme catalyses (1S,2R)-1-C-(indol-3-yl)glycerol 3-phosphate + L-serine = D-glyceraldehyde 3-phosphate + L-tryptophan + H2O. The protein operates within amino-acid biosynthesis; L-tryptophan biosynthesis; L-tryptophan from chorismate: step 5/5. Its function is as follows. The alpha subunit is responsible for the aldol cleavage of indoleglycerol phosphate to indole and glyceraldehyde 3-phosphate. The sequence is that of Tryptophan synthase alpha chain from Streptococcus thermophilus (strain ATCC BAA-250 / LMG 18311).